We begin with the raw amino-acid sequence, 100 residues long: NADH-quinone oxidoreductase subunit K (100 aa).

Transmembrane regions (helical) follow at residues Leu-4–Ile-24, Leu-28–Val-48, and Val-60–Leu-80.

Belongs to the complex I subunit 4L family. NDH-1 is composed of 13 different subunits. Subunits NuoA, H, J, K, L, M, N constitute the membrane sector of the complex.

The protein localises to the cell inner membrane. The enzyme catalyses a quinone + NADH + 5 H(+)(in) = a quinol + NAD(+) + 4 H(+)(out). Functionally, NDH-1 shuttles electrons from NADH, via FMN and iron-sulfur (Fe-S) centers, to quinones in the respiratory chain. The immediate electron acceptor for the enzyme in this species is believed to be ubiquinone. Couples the redox reaction to proton translocation (for every two electrons transferred, four hydrogen ions are translocated across the cytoplasmic membrane), and thus conserves the redox energy in a proton gradient. This is NADH-quinone oxidoreductase subunit K from Yersinia pseudotuberculosis serotype O:1b (strain IP 31758).